Consider the following 259-residue polypeptide: Eukaryotic translation initiation factor 3 subunit G-2 (259 aa).

One can recognise an RRM domain in the interval 179 to 257 (SAVRISNLSE…LILSVEWSKP (79 aa)).

This sequence belongs to the eIF-3 subunit G family. As to quaternary structure, component of the eukaryotic translation initiation factor 3 (eIF-3) complex. The eIF-3 complex interacts with pix.

The protein localises to the cytoplasm. Its function is as follows. RNA-binding component of the eukaryotic translation initiation factor 3 (eIF-3) complex, which is involved in protein synthesis of a specialized repertoire of mRNAs and, together with other initiation factors, stimulates binding of mRNA and methionyl-tRNAi to the 40S ribosome. The eIF-3 complex specifically targets and initiates translation of a subset of mRNAs involved in cell proliferation. This subunit can bind 18S rRNA. This is Eukaryotic translation initiation factor 3 subunit G-2 from Drosophila virilis (Fruit fly).